The chain runs to 440 residues: MTAPFAIRRLNAADPDFGRHLDHLLSWESVSDDSVNQRVLDIIAAVRSRGDAAVVEFTQRFDGLQAASMADLILPRERLELALTRITVAQREALEVAAERVRSYHEKQKQGSWRYTEADGTVLGQQVTPLDRAGLYVPGGKASYPSSVLMNAIPAKVAGVSEVVMVVPTPRGEINEIVLAAACIAGVDRVFTIGGAQAVAALAYGTESVPRVDKIVGPGNIYVATAKRHVFGQVGIDMIAGPSEILVVCDGQTDPDWIAMDLFSQAEHDEDAQSILVSPDAAFLDRVADSIARLLPTMERAEIIRTSLEGRGALIQVADQAQACAVANRIAPEHLELSVADPESWLPEIRHAGAIFMGRYTAEALGDYCAGPNHVLPTSGTARFSSPLGVYDFQKRSSIINCSAEGASVLGRTASVLARGESLTAHARSAEYRILDEKEA.

Tyr136, Gln197, and Asn220 together coordinate NAD(+). Substrate contacts are provided by Ser243, Gln265, and His268. Residues Gln265 and His268 each contribute to the Zn(2+) site. Residues Glu333 and His334 each act as proton acceptor in the active site. Substrate-binding residues include His334, Asp367, Glu421, and His426. Asp367 contacts Zn(2+). His426 lines the Zn(2+) pocket.

This sequence belongs to the histidinol dehydrogenase family. Zn(2+) is required as a cofactor.

It carries out the reaction L-histidinol + 2 NAD(+) + H2O = L-histidine + 2 NADH + 3 H(+). It participates in amino-acid biosynthesis; L-histidine biosynthesis; L-histidine from 5-phospho-alpha-D-ribose 1-diphosphate: step 9/9. In terms of biological role, catalyzes the sequential NAD-dependent oxidations of L-histidinol to L-histidinaldehyde and then to L-histidine. In Pseudomonas aeruginosa (strain ATCC 15692 / DSM 22644 / CIP 104116 / JCM 14847 / LMG 12228 / 1C / PRS 101 / PAO1), this protein is Histidinol dehydrogenase.